Here is a 60-residue protein sequence, read N- to C-terminus: Large ribosomal subunit protein bL32 (60 aa).

Basic residues predominate over residues 1-16 (MAVPRNRHSNARKNIR). Positions 1-20 (MAVPRNRHSNARKNIRRSHD) are disordered.

Belongs to the bacterial ribosomal protein bL32 family.

The sequence is that of Large ribosomal subunit protein bL32 (rpmF) from Chlamydia pneumoniae (Chlamydophila pneumoniae).